A 187-amino-acid chain; its full sequence is Macro domain-containing protein MM_0177 (187 aa).

Residues 8-187 (VEEGIRMELN…SIKKALSKIL (180 aa)) enclose the Macro domain.

This sequence belongs to the MacroD-type family.

The sequence is that of Macro domain-containing protein MM_0177 from Methanosarcina mazei (strain ATCC BAA-159 / DSM 3647 / Goe1 / Go1 / JCM 11833 / OCM 88) (Methanosarcina frisia).